A 362-amino-acid chain; its full sequence is Aminomethyltransferase (362 aa).

It belongs to the GcvT family. In terms of assembly, the glycine cleavage system is composed of four proteins: P, T, L and H.

The catalysed reaction is N(6)-[(R)-S(8)-aminomethyldihydrolipoyl]-L-lysyl-[protein] + (6S)-5,6,7,8-tetrahydrofolate = N(6)-[(R)-dihydrolipoyl]-L-lysyl-[protein] + (6R)-5,10-methylene-5,6,7,8-tetrahydrofolate + NH4(+). The glycine cleavage system catalyzes the degradation of glycine. This Porphyromonas gingivalis (strain ATCC 33277 / DSM 20709 / CIP 103683 / JCM 12257 / NCTC 11834 / 2561) protein is Aminomethyltransferase.